Here is a 400-residue protein sequence, read N- to C-terminus: Acetate kinase (400 aa).

Residue Asn10 coordinates Mg(2+). Position 17 (Lys17) interacts with ATP. Position 91 (Arg91) interacts with substrate. Asp148 acts as the Proton donor/acceptor in catalysis. ATP contacts are provided by residues 208–212 (HLGNG), 283–285 (DCR), and 331–335 (GIGEN). Position 385 (Glu385) interacts with Mg(2+).

Belongs to the acetokinase family. As to quaternary structure, homodimer. It depends on Mg(2+) as a cofactor. Mn(2+) serves as cofactor.

It localises to the cytoplasm. The enzyme catalyses acetate + ATP = acetyl phosphate + ADP. It functions in the pathway metabolic intermediate biosynthesis; acetyl-CoA biosynthesis; acetyl-CoA from acetate: step 1/2. Catalyzes the formation of acetyl phosphate from acetate and ATP. Can also catalyze the reverse reaction. In Shewanella frigidimarina (strain NCIMB 400), this protein is Acetate kinase.